We begin with the raw amino-acid sequence, 90 residues long: Small ribosomal subunit protein uS15 (90 aa).

The protein belongs to the universal ribosomal protein uS15 family. Part of the 30S ribosomal subunit. Forms a bridge to the 50S subunit in the 70S ribosome, contacting the 23S rRNA.

One of the primary rRNA binding proteins, it binds directly to 16S rRNA where it helps nucleate assembly of the platform of the 30S subunit by binding and bridging several RNA helices of the 16S rRNA. Functionally, forms an intersubunit bridge (bridge B4) with the 23S rRNA of the 50S subunit in the ribosome. The polypeptide is Small ribosomal subunit protein uS15 (Campylobacter curvus (strain 525.92)).